The primary structure comprises 250 residues: 5'-nucleotidase SurE (250 aa).

The a divalent metal cation site is built by D9, D10, S40, and N92.

Belongs to the SurE nucleotidase family. A divalent metal cation serves as cofactor.

It localises to the cytoplasm. The catalysed reaction is a ribonucleoside 5'-phosphate + H2O = a ribonucleoside + phosphate. Its function is as follows. Nucleotidase that shows phosphatase activity on nucleoside 5'-monophosphates. In Idiomarina loihiensis (strain ATCC BAA-735 / DSM 15497 / L2-TR), this protein is 5'-nucleotidase SurE.